The sequence spans 79 residues: HLILASALICALVVCTFAEEQVNVPFLPDEREVKCIGWQEYCRGNLPCCDDCVMCECNIMGQNCRCNHPRITSECGSRR.

The first 18 residues, 1-18, serve as a signal peptide directing secretion; sequence HLILASALICALVVCTFA. Positions 19 to 31 are excised as a propeptide; sequence EEQVNVPFLPDER. 5 disulfide bridges follow: Cys-35–Cys-49, Cys-42–Cys-55, Cys-48–Cys-66, Cys-52–Cys-75, and Cys-57–Cys-64. Positions 78 to 79 are excised as a propeptide; it reads RR.

It belongs to the neurotoxin 02 (plectoxin) family. 02 (plectoxin) subfamily. In terms of tissue distribution, expressed by the venom gland.

It localises to the secreted. In terms of biological role, potent toxin that may paralyze and/or kill insect pests such as H.virescens (lepidoptera), S.exigua (beet armyworm) and M.sexta (tobacco hornworm). The polypeptide is U1-plectoxin-Pt1c (Plectreurys tristis (Spider)).